Here is a 406-residue protein sequence, read N- to C-terminus: Odorant receptor 10a (406 aa).

Over Met1 to Leu45 the chain is Cytoplasmic. Residues Ile46–Leu66 traverse the membrane as a helical segment. The Extracellular portion of the chain corresponds to Asp67–Ala74. A helical transmembrane segment spans residues Leu75–Leu95. Topologically, residues Arg96–Ala143 are cytoplasmic. Residues Gly144–Leu164 traverse the membrane as a helical segment. Residues Gln165–Pro189 lie on the Extracellular side of the membrane. A glycan (N-linked (GlcNAc...) asparagine) is linked at Asn178. The helical transmembrane segment at Phe190–Gly210 threads the bilayer. At Gly211–Thr281 the chain is on the cytoplasmic side. The helical transmembrane segment at Ile282–Leu302 threads the bilayer. The Extracellular portion of the chain corresponds to Leu303–Asn308. A helical membrane pass occupies residues Gly309–Tyr329. Over Cys330–Arg372 the chain is Cytoplasmic. Residues Pro373–Gln393 form a helical membrane-spanning segment. Residues Thr394–Gln406 are Extracellular-facing.

This sequence belongs to the insect chemoreceptor superfamily. Heteromeric odorant receptor channel (TC 1.A.69) family. Or1a subfamily. Interacts with Orco. Complexes exist early in the endomembrane system in olfactory sensory neurons (OSNs), coupling these complexes to the conserved ciliary trafficking pathway. As to expression, expressed in olfactory sensory neurons in the antenna.

It localises to the cell membrane. Its function is as follows. Odorant receptor which mediates acceptance or avoidance behavior, depending on its substrates. The odorant receptor repertoire encodes a large collection of odor stimuli that vary widely in identity, intensity, and duration. May form a complex with Orco to form odorant-sensing units, providing sensitive and prolonged odorant signaling and calcium permeability. Involved in the behavioral responses to esters, and specifically to ethyl hexanoate, benzaldehyde, and acetophenone. This is Odorant receptor 10a (Or10a) from Drosophila melanogaster (Fruit fly).